Consider the following 265-residue polypeptide: RNA-binding protein 7 (265 aa).

Glycine 2 is subject to N-acetylglycine. The 78-residue stretch at 10–87 (RTLFVGNLET…RPIKIQFRSG (78 aa)) folds into the RRM domain. ZCCHC8 binding stretches follow at residues 25 to 35 (LLFELFHQAGP) and 59 to 76 (HEVS…IKLF). The interval 91–125 (ASQDASVSYPQHHVGNLSPTSTSPNSYERTVGNVS) is disordered. Positions 107–125 (LSPTSTSPNSYERTVGNVS) are enriched in polar residues. Residue serine 136 is modified to Phosphoserine; by MAPKAPK2. Position 137 is a phosphoserine (serine 137). An Omega-N-methylarginine modification is found at arginine 152. 2 disordered regions span residues 166–224 (DQLG…HGSD) and 237–265 (DDRN…SSRH). Residues 170 to 196 (FSPSAQPHGHTFNQSSSSQWRQDALSS) are compositionally biased toward polar residues. Serine 203 is modified (phosphoserine). Composition is skewed to basic and acidic residues over residues 207 to 224 (LADR…HGSD) and 237 to 256 (DDRN…DSSR).

As to quaternary structure, component of the nuclear exosome targeting (NEXT) complex composed of MTREX, ZCCHC8, and RBM7 that directs a subset of non-coding short-lived RNAs for exosomal degradation. Interacts with ZCCHC8 and SF3B2/SAP145. Binds to MTREX through ZCCHC8. Interacts with YWHAE and YWHAZ; these interactions are stress-dependent and RBM7 phosphorylation dependent; release RNA from the NEXT complex and may affect RNA targeting to the nuclear RNA exosomome for degradation. Interacts with MEPCE and LARP7, the core subunits of 7SK snRNP; upon genotoxic stress this interaction is enhanced, triggering the release of inactive P-TEFb complex from the core and P-TEFb complex activation. In terms of processing, phosphorylated at Ser-136 by MAPK14/p38-alpha-activated MAPKAPK2/MK2; this phosphorylation is stress-dependent; this phosphorylation decreases its RNA-binding capacity therefore affecting RNA nuclear exosome-mediated degradation. This phosphorylation mediates YWHAE and YWHAZ interactions.

It localises to the nucleus. Its subcellular location is the nucleoplasm. RNA-binding subunit of the trimeric nuclear exosome targeting (NEXT) complex, a complex that functions as an RNA exosome cofactor that directs a subset of non-coding short-lived RNAs for exosomal degradation. NEXT is involved in surveillance and turnover of aberrant transcripts and non-coding RNAs. Binds preferentially polyuridine sequences and associates with newly synthesized RNAs, including pre-mRNAs and short-lived exosome substrates such as promoter upstream transcripts (PROMPTs), enhancer RNAs (eRNAs), and 3'-extended products from small nuclear RNAs (snRNAs). Participates in several biological processes including DNA damage response (DDR) and stress response. During stress response, activation of the p38MAPK-MK2 pathway decreases RBM7-RNA-binding and subsequently the RNA exosome degradation activities, thereby modulating the turnover of non-coding transcriptome. Participates in DNA damage response (DDR), through its interaction with MEPCE and LARP7, the core subunits of 7SK snRNP complex, that release the positive transcription elongation factor b (P-TEFb) complex from the 7SK snRNP. In turn, activation of P-TEFb complex induces the transcription of P-TEFb-dependent DDR genes to promote cell viability. This chain is RNA-binding protein 7, found in Mus musculus (Mouse).